The following is a 223-amino-acid chain: Twisted gastrulation protein homolog 1 (223 aa).

An N-terminal signal peptide occupies residues 1 to 25; sequence MKLHYVAVLTLAILMFLTWLPESLS. Residues Asn52 and Asn81 are each glycosylated (N-linked (GlcNAc...) asparagine).

Belongs to the twisted gastrulation protein family. As to quaternary structure, interacts with CHRD and BMP4. This interaction enhances CHRD/BMP4 complex formation. Interacts with BMP7.

The protein resides in the secreted. Functionally, may be involved in dorsoventral axis formation. Seems to antagonize BMP signaling by forming ternary complexes with CHRD and BMPs, thereby preventing BMPs from binding to their receptors. In addition to the anti-BMP function, also has pro-BMP activity, partly mediated by cleavage and degradation of CHRD, which releases BMPs from ternary complexes. May be an important modulator of BMP-regulated cartilage development and chondrocyte differentiation. May play a role in thymocyte development. The polypeptide is Twisted gastrulation protein homolog 1 (TWSG1) (Homo sapiens (Human)).